A 172-amino-acid polypeptide reads, in one-letter code: NADH-quinone oxidoreductase subunit B (172 aa).

Cys-42, Cys-43, Cys-107, and Cys-136 together coordinate [4Fe-4S] cluster.

The protein belongs to the complex I 20 kDa subunit family. In terms of assembly, NDH-1 is composed of 14 different subunits. Subunits NuoB, C, D, E, F, and G constitute the peripheral sector of the complex. Requires [4Fe-4S] cluster as cofactor.

The protein localises to the cell inner membrane. The catalysed reaction is a quinone + NADH + 5 H(+)(in) = a quinol + NAD(+) + 4 H(+)(out). Functionally, NDH-1 shuttles electrons from NADH, via FMN and iron-sulfur (Fe-S) centers, to quinones in the respiratory chain. The immediate electron acceptor for the enzyme in this species is believed to be ubiquinone. Couples the redox reaction to proton translocation (for every two electrons transferred, four hydrogen ions are translocated across the cytoplasmic membrane), and thus conserves the redox energy in a proton gradient. The protein is NADH-quinone oxidoreductase subunit B of Sulfurovum sp. (strain NBC37-1).